A 446-amino-acid chain; its full sequence is CBL-interacting protein kinase 8 (446 aa).

Positions 13–266 constitute a Protein kinase domain; it reads YEVGRTIGEG…IEEIRNDEWF (254 aa). ATP is bound by residues 19-27 and lysine 42; that span reads IGEGTFAKV. Aspartate 136 acts as the Proton acceptor in catalysis. Residues 154–181 are activation loop; the sequence is DFGLSAWPAQGGALLRTTCGTPNYVAPE. Residues 301 to 329 enclose the NAF domain; it reads LDDEAGPLTLNAFDLIILSQGLNLAALFD. The interval 336–365 is PPI; sequence KLQNRFLSRKPAKVIMSSMEVVAQSMGYKT.

Belongs to the protein kinase superfamily. CAMK Ser/Thr protein kinase family. SNF1 subfamily. Mn(2+) serves as cofactor.

The enzyme catalyses L-seryl-[protein] + ATP = O-phospho-L-seryl-[protein] + ADP + H(+). It carries out the reaction L-threonyl-[protein] + ATP = O-phospho-L-threonyl-[protein] + ADP + H(+). CIPK serine-threonine protein kinases interact with CBL proteins. Binding of a CBL protein to the regulatory NAF domain of CIPK protein lead to the activation of the kinase in a calcium-dependent manner. In Oryza sativa subsp. japonica (Rice), this protein is CBL-interacting protein kinase 8 (CIPK8).